The sequence spans 707 residues: Phosphoprotein (707 aa).

The interval 1 to 35 (MDKLDLVNDGLDIIDFIQKNQKEIQKTYGRSSIQQ) is N0 binding. Disordered stretches follow at residues 26 to 103 (KTYG…EDPD), 193 to 229 (FVPK…PRGN), 254 to 446 (FAKS…AENV), and 454 to 473 (VTRN…SLDD). Composition is skewed to polar residues over residues 28–37 (YGRSSIQQPS) and 77–96 (DLSS…SNTR). A Phosphoserine; by host modification is found at serine 257. Basic and acidic residues predominate over residues 296-317 (FPEKEETPDVRRKDSLMQDSCK). Position 350 is a phosphoserine; by host (serine 350). Residues 435–446 (NQESKSVTAENV) show a composition bias toward polar residues. A multimerization region spans residues 473–578 (DKYIMPSDDF…LVSMMIMIPG (106 aa)).

Homotetramer. Interacts (via multimerization domain) with polymerase L; this interaction forms the polymerase L-P complex. Interacts (via N-terminus) with N0 (via Ncore); this interaction allows P to chaperon N0 to avoid N polymerization before encapsidation. Interacts (via C-terminus) with N-RNA template; this interaction positions the polymerase on the template for both transcription and replication.

Its function is as follows. Essential cofactor of the RNA polymerase L that plays a central role in the transcription and replication by forming the polymerase complex with RNA polymerase L and recruiting L to the genomic N-RNA template for RNA synthesis. Also plays a central role in the encapsidation of nascent RNA chains by forming the encapsidation complex with the nucleocapsid protein N (N-P complex). Acts as a chaperone for newly synthesized free N protein, so-called N0, allowing encapsidation of nascent RNA chains during replication. The nucleoprotein protein N prevents excessive phosphorylation of P, which leads to down-regulation of viral transcription/ replication. Participates, together with N, in the formation of viral factories (viroplasms), which are large inclusions in the host cytoplasm where replication takes place. This chain is Phosphoprotein (P/V/C), found in Equus caballus (Horse).